The chain runs to 338 residues: RNA 3'-terminal phosphate cyclase (338 aa).

ATP-binding positions include Gln-103 and 283-287 (YLADQ). His-308 functions as the Tele-AMP-histidine intermediate in the catalytic mechanism.

The protein belongs to the RNA 3'-terminal cyclase family. Type 1 subfamily.

It is found in the cytoplasm. It carries out the reaction a 3'-end 3'-phospho-ribonucleotide-RNA + ATP = a 3'-end 2',3'-cyclophospho-ribonucleotide-RNA + AMP + diphosphate. Catalyzes the conversion of 3'-phosphate to a 2',3'-cyclic phosphodiester at the end of RNA. The mechanism of action of the enzyme occurs in 3 steps: (A) adenylation of the enzyme by ATP; (B) transfer of adenylate to an RNA-N3'P to produce RNA-N3'PP5'A; (C) and attack of the adjacent 2'-hydroxyl on the 3'-phosphorus in the diester linkage to produce the cyclic end product. The biological role of this enzyme is unknown but it is likely to function in some aspects of cellular RNA processing. This is RNA 3'-terminal phosphate cyclase from Escherichia coli (strain K12 / MC4100 / BW2952).